Reading from the N-terminus, the 284-residue chain is 2,3,4,5-tetrahydropyridine-2,6-dicarboxylate N-succinyltransferase (284 aa).

Substrate is bound by residues R111 and D148.

This sequence belongs to the transferase hexapeptide repeat family. In terms of assembly, homotrimer.

Its subcellular location is the cytoplasm. The catalysed reaction is (S)-2,3,4,5-tetrahydrodipicolinate + succinyl-CoA + H2O = (S)-2-succinylamino-6-oxoheptanedioate + CoA. Its pathway is amino-acid biosynthesis; L-lysine biosynthesis via DAP pathway; LL-2,6-diaminopimelate from (S)-tetrahydrodipicolinate (succinylase route): step 1/3. This Brucella suis (strain ATCC 23445 / NCTC 10510) protein is 2,3,4,5-tetrahydropyridine-2,6-dicarboxylate N-succinyltransferase.